A 272-amino-acid polypeptide reads, in one-letter code: Ethanolamine ammonia-lyase small subunit (272 aa).

3 residues coordinate adenosylcob(III)alamin: Val161, Glu182, and Cys211.

This sequence belongs to the EutC family. As to quaternary structure, the basic unit is a heterodimer which dimerizes to form tetramers. The heterotetramers trimerize; 6 large subunits form a core ring with 6 small subunits projecting outwards. Adenosylcob(III)alamin is required as a cofactor.

The protein localises to the bacterial microcompartment. It carries out the reaction ethanolamine = acetaldehyde + NH4(+). The protein operates within amine and polyamine degradation; ethanolamine degradation. Catalyzes the deamination of various vicinal amino-alcohols to oxo compounds. Allows this organism to utilize ethanolamine as the sole source of nitrogen and carbon in the presence of external vitamin B12. The protein is Ethanolamine ammonia-lyase small subunit of Pseudomonas putida (strain W619).